The following is a 441-amino-acid chain: BTB/POZ domain-containing protein At3g05675 (441 aa).

Residues 20 to 98 (SDIVVRLRNE…LYVVSDDVHE (79 aa)) form the BTB domain.

It functions in the pathway protein modification; protein ubiquitination. May act as a substrate-specific adapter of an E3 ubiquitin-protein ligase complex (CUL3-RBX1-BTB) which mediates the ubiquitination and subsequent proteasomal degradation of target proteins. The sequence is that of BTB/POZ domain-containing protein At3g05675 from Arabidopsis thaliana (Mouse-ear cress).